A 372-amino-acid chain; its full sequence is Queuine tRNA-ribosyltransferase (372 aa).

Residue aspartate 93 is the Proton acceptor of the active site. Substrate is bound by residues 93 to 97 (DSGGF), aspartate 147, glutamine 190, and glycine 217. The tract at residues 248–254 (GVGSPDC) is RNA binding. The active-site Nucleophile is aspartate 267. The interval 272-276 (TRMAR) is RNA binding; important for wobble base 34 recognition. Zn(2+) is bound by residues cysteine 305, cysteine 307, cysteine 310, and histidine 336.

It belongs to the queuine tRNA-ribosyltransferase family. In terms of assembly, homodimer. Within each dimer, one monomer is responsible for RNA recognition and catalysis, while the other monomer binds to the replacement base PreQ1. Zn(2+) is required as a cofactor.

It catalyses the reaction 7-aminomethyl-7-carbaguanine + guanosine(34) in tRNA = 7-aminomethyl-7-carbaguanosine(34) in tRNA + guanine. It participates in tRNA modification; tRNA-queuosine biosynthesis. Catalyzes the base-exchange of a guanine (G) residue with the queuine precursor 7-aminomethyl-7-deazaguanine (PreQ1) at position 34 (anticodon wobble position) in tRNAs with GU(N) anticodons (tRNA-Asp, -Asn, -His and -Tyr). Catalysis occurs through a double-displacement mechanism. The nucleophile active site attacks the C1' of nucleotide 34 to detach the guanine base from the RNA, forming a covalent enzyme-RNA intermediate. The proton acceptor active site deprotonates the incoming PreQ1, allowing a nucleophilic attack on the C1' of the ribose to form the product. After dissociation, two additional enzymatic reactions on the tRNA convert PreQ1 to queuine (Q), resulting in the hypermodified nucleoside queuosine (7-(((4,5-cis-dihydroxy-2-cyclopenten-1-yl)amino)methyl)-7-deazaguanosine). The protein is Queuine tRNA-ribosyltransferase of Desulforudis audaxviator (strain MP104C).